The chain runs to 821 residues: Ent-isokaur-15-ene synthase (821 aa).

Mg(2+)-binding residues include aspartate 556, aspartate 560, asparagine 701, threonine 705, and glutamate 709. The DDXXD motif motif lies at 556–560; that stretch reads DDFFD.

Belongs to the terpene synthase family. It depends on Mg(2+) as a cofactor.

It catalyses the reaction ent-copalyl diphosphate = ent-isokaurene + diphosphate. It participates in secondary metabolite biosynthesis; terpenoid biosynthesis. Its function is as follows. Involved in the biosynthesis of ent-kaurene diterpenoids natural products. Catalyzes the conversion of ent-copalyl diphosphate to the phytoalexin precursor ent-isokaur-15-ene. In Oryza sativa subsp. indica (Rice), this protein is Ent-isokaur-15-ene synthase.